The following is a 258-amino-acid chain: uncharacterized protein (258 aa).

Positions 40–54 are enriched in polar residues; sequence AQKTDTPLDSSSYAV. Residues 40–63 form a disordered region; the sequence is AQKTDTPLDSSSYAVTSPEEAPNE.

This is an uncharacterized protein from Treponema pallidum (strain Nichols).